The chain runs to 191 residues: HTH-type transcriptional regulator SAR0097 (191 aa).

The region spanning 12-74 (AEYNQQIILT…AIMDKKVDQM (63 aa)) is the HTH tetR-type domain. A DNA-binding region (H-T-H motif) is located at residues 37-56 (KMSDIAKISGVGVGTLYRHF).

This Staphylococcus aureus (strain MRSA252) protein is HTH-type transcriptional regulator SAR0097.